Consider the following 122-residue polypeptide: Large ribosomal subunit protein bL17 (122 aa).

The protein belongs to the bacterial ribosomal protein bL17 family. Part of the 50S ribosomal subunit. Contacts protein L32.

The protein is Large ribosomal subunit protein bL17 of Neisseria meningitidis serogroup C / serotype 2a (strain ATCC 700532 / DSM 15464 / FAM18).